Here is a 265-residue protein sequence, read N- to C-terminus: UPF0026 protein slr1464 (265 aa).

Residues 16-252 (RYGRSLGIDP…QNLAKKISGA (237 aa)) form the Radical SAM core domain. Residues cysteine 32, cysteine 36, and cysteine 39 each coordinate [4Fe-4S] cluster. Residues 204–230 (RPTRPKPLQRELEGRGNHTGTPYGDRP) are disordered.

Belongs to the UPF0026 family. The cofactor is [4Fe-4S] cluster.

This chain is UPF0026 protein slr1464, found in Synechocystis sp. (strain ATCC 27184 / PCC 6803 / Kazusa).